The sequence spans 594 residues: UvrABC system protein C (594 aa).

One can recognise a GIY-YIG domain in the interval 14–91 (DQPGCYLMKD…IKKHDPKYNI (78 aa)). The region spanning 196–231 (KEVRSELETKMYEASEKLEFERAKELRDQIAHIDAI) is the UVR domain.

This sequence belongs to the UvrC family. Interacts with UvrB in an incision complex.

Its subcellular location is the cytoplasm. Functionally, the UvrABC repair system catalyzes the recognition and processing of DNA lesions. UvrC both incises the 5' and 3' sides of the lesion. The N-terminal half is responsible for the 3' incision and the C-terminal half is responsible for the 5' incision. In Bacillus thuringiensis (strain Al Hakam), this protein is UvrABC system protein C.